Consider the following 227-residue polypeptide: Octanoyltransferase (227 aa).

Residues 47–223 (EDTADEIWLL…HLLRLLPPGV (177 aa)) enclose the BPL/LPL catalytic domain. Residues 87 to 94 (RGGQITYH), 154 to 156 (ALG), and 167 to 169 (GLA) each bind substrate. The active-site Acyl-thioester intermediate is the Cys185.

The protein belongs to the LipB family.

It is found in the cytoplasm. It catalyses the reaction octanoyl-[ACP] + L-lysyl-[protein] = N(6)-octanoyl-L-lysyl-[protein] + holo-[ACP] + H(+). It functions in the pathway protein modification; protein lipoylation via endogenous pathway; protein N(6)-(lipoyl)lysine from octanoyl-[acyl-carrier-protein]: step 1/2. Its function is as follows. Catalyzes the transfer of endogenously produced octanoic acid from octanoyl-acyl-carrier-protein onto the lipoyl domains of lipoate-dependent enzymes. Lipoyl-ACP can also act as a substrate although octanoyl-ACP is likely to be the physiological substrate. The chain is Octanoyltransferase from Azoarcus sp. (strain BH72).